A 419-amino-acid polypeptide reads, in one-letter code: Creatine kinase S-type, mitochondrial (419 aa).

A mitochondrion-targeting transit peptide spans 1–39 (MAGTFGRLLAGRVTAALFAAAGSGVLTTGYLLNQQNVKA). Residues 46-132 (KLFPPSADYP…FDPVIKARHN (87 aa)) enclose the Phosphagen kinase N-terminal domain. One can recognise a Phosphagen kinase C-terminal domain in the interval 159 to 401 (YVLSSRVRTG…NYLVDCEKKL (243 aa)). ATP contacts are provided by residues 162-166 (SSRVR), His-225, Arg-270, Arg-326, 354-359 (RGTGGV), and Asp-369.

This sequence belongs to the ATP:guanido phosphotransferase family. As to quaternary structure, exists as an octamer composed of four MTCK homodimers. In terms of tissue distribution, expressed in the leg muscle and heart.

The protein localises to the mitochondrion inner membrane. The catalysed reaction is creatine + ATP = N-phosphocreatine + ADP + H(+). Its function is as follows. Reversibly catalyzes the transfer of phosphate between ATP and various phosphogens (e.g. creatine phosphate). Creatine kinase isoenzymes play a central role in energy transduction in tissues with large, fluctuating energy demands, such as skeletal muscle, heart, brain and spermatozoa. This Gallus gallus (Chicken) protein is Creatine kinase S-type, mitochondrial (CKMT2).